The primary structure comprises 417 residues: Serine hydroxymethyltransferase (417 aa).

(6S)-5,6,7,8-tetrahydrofolate-binding positions include Leu-120 and 124–126 (GHL). At Lys-229 the chain carries N6-(pyridoxal phosphate)lysine.

This sequence belongs to the SHMT family. In terms of assembly, homodimer. Pyridoxal 5'-phosphate serves as cofactor.

The protein resides in the cytoplasm. The catalysed reaction is (6R)-5,10-methylene-5,6,7,8-tetrahydrofolate + glycine + H2O = (6S)-5,6,7,8-tetrahydrofolate + L-serine. It functions in the pathway one-carbon metabolism; tetrahydrofolate interconversion. It participates in amino-acid biosynthesis; glycine biosynthesis; glycine from L-serine: step 1/1. In terms of biological role, catalyzes the reversible interconversion of serine and glycine with tetrahydrofolate (THF) serving as the one-carbon carrier. This reaction serves as the major source of one-carbon groups required for the biosynthesis of purines, thymidylate, methionine, and other important biomolecules. Also exhibits THF-independent aldolase activity toward beta-hydroxyamino acids, producing glycine and aldehydes, via a retro-aldol mechanism. This is Serine hydroxymethyltransferase from Anaeromyxobacter dehalogenans (strain 2CP-C).